The chain runs to 127 residues: 13 kDa ribonucleoprotein-associated protein (127 aa).

Belongs to the eukaryotic ribosomal protein eL8 family. As to quaternary structure, component of the U3 snoRNP particle. Binds to the C'/D and B/C motifs in U3 snoRNA. Component of the 25S U4/U6.U5 tri-snRNP particle, a subcomplex of the spliceosome. Binds to the 5' stem-loop of U4 snRNA.

The protein localises to the nucleus. It localises to the nucleolus. In terms of biological role, common component of the spliceosome and rRNA processing machinery. In association with the spliceosomal U4/U6.U5 tri-snRNP particle, required for splicing of pre-mRNA. In association with box C/D snoRNPs, required for processing of pre-ribosomal RNA (rRNA) and site-specific 2'-O-methylation of substrate RNAs. Essential for the accumulation and stability of U4 snRNA, U6 snRNA, and box C/D snoRNAs. This chain is 13 kDa ribonucleoprotein-associated protein (SNU13), found in Eremothecium gossypii (strain ATCC 10895 / CBS 109.51 / FGSC 9923 / NRRL Y-1056) (Yeast).